Here is a 782-residue protein sequence, read N- to C-terminus: Coiled-coil alpha-helical rod protein 1 (782 aa).

Basic and acidic residues-rich tracts occupy residues 62-74 and 208-218; these read ERDV…EPGR and ETRRAGEAKEL. Disordered stretches follow at residues 62 to 82 and 191 to 218; these read ERDV…WGLE and SSLT…AKEL. Coiled coils occupy residues 82 to 314, 344 to 435, and 498 to 691; these read EGSQ…ELTR, LMVQ…VVNA, and VADV…QQEG.

The protein resides in the cytoplasm. It localises to the nucleus. Its function is as follows. May be a regulator of keratinocyte proliferation or differentiation. The polypeptide is Coiled-coil alpha-helical rod protein 1 (CCHCR1) (Pongo pygmaeus (Bornean orangutan)).